The primary structure comprises 347 residues: CRISPR-associated endonuclease Cas1 4 (347 aa).

The segment covering methionine 1–proline 21 has biased composition (basic and acidic residues). Positions methionine 1–leucine 25 are disordered. Mn(2+)-binding residues include glutamate 176, histidine 241, and glutamate 256.

Belongs to the CRISPR-associated endonuclease Cas1 family. In terms of assembly, homodimer, forms a heterotetramer with a Cas2 homodimer. The cofactor is Mg(2+). Mn(2+) serves as cofactor.

Functionally, CRISPR (clustered regularly interspaced short palindromic repeat), is an adaptive immune system that provides protection against mobile genetic elements (viruses, transposable elements and conjugative plasmids). CRISPR clusters contain spacers, sequences complementary to antecedent mobile elements, and target invading nucleic acids. CRISPR clusters are transcribed and processed into CRISPR RNA (crRNA). Acts as a dsDNA endonuclease. Involved in the integration of spacer DNA into the CRISPR cassette. This Methanospirillum hungatei JF-1 (strain ATCC 27890 / DSM 864 / NBRC 100397 / JF-1) protein is CRISPR-associated endonuclease Cas1 4.